A 276-amino-acid polypeptide reads, in one-letter code: MSNSRQHQGHFARKRFGQNFLVDHGVIDSIVTTIGPARGQRMVEIGPGLGALTEPLIARLATPESPLHAVELDRDLIGRLQQRFGPLLELHAGDALAFDFRSLAAPGDKPSLRIVGNLPYNISSPLLFHLMTFADAVIDQHFMLQNEVVERMVAEPGTKAFSRLSVMLQYRYVMEKMLDVPPESFQPPPKVDSAIVRMIPYEPHELPDVDPVLLGELVTAAFSQRRKMLRNTLGDYRETIDFDGLGFDLARRAEDVSVAEYVGVAQALAARRKAAE.

The S-adenosyl-L-methionine site is built by Asn-19, Leu-21, Gly-46, Glu-71, Asp-94, and Asn-117.

It belongs to the class I-like SAM-binding methyltransferase superfamily. rRNA adenine N(6)-methyltransferase family. RsmA subfamily.

The protein resides in the cytoplasm. It catalyses the reaction adenosine(1518)/adenosine(1519) in 16S rRNA + 4 S-adenosyl-L-methionine = N(6)-dimethyladenosine(1518)/N(6)-dimethyladenosine(1519) in 16S rRNA + 4 S-adenosyl-L-homocysteine + 4 H(+). Specifically dimethylates two adjacent adenosines (A1518 and A1519) in the loop of a conserved hairpin near the 3'-end of 16S rRNA in the 30S particle. May play a critical role in biogenesis of 30S subunits. The protein is Ribosomal RNA small subunit methyltransferase A of Burkholderia ambifaria (strain ATCC BAA-244 / DSM 16087 / CCUG 44356 / LMG 19182 / AMMD) (Burkholderia cepacia (strain AMMD)).